Here is a 168-residue protein sequence, read N- to C-terminus: Small ribosomal subunit protein uS8 (168 aa).

The interval 59–93 (EEFKKMKELAEKSPNPKMRRYLQQLIDYNKGTQYP) is not found in other S8 sequences.

This sequence belongs to the universal ribosomal protein uS8 family. In terms of assembly, part of the 30S ribosomal subunit. Contacts proteins S5 and S12.

Functionally, one of the primary rRNA binding proteins, it binds directly to 16S rRNA central domain where it helps coordinate assembly of the platform of the 30S subunit. This is Small ribosomal subunit protein uS8 from Aquifex pyrophilus.